The primary structure comprises 558 residues: AP2-like ethylene-responsive transcription factor AIL5 (558 aa).

Positions 1 to 54 (MKNNNNKSSSSSSYDSSLSPSSSSSSHQNWLSFSLSNNNNNFNSSSNPNLTSST) are enriched in low complexity. Disordered regions lie at residues 1 to 65 (MKNN…PSHL), 74 to 93 (SPVE…ATAV), and 166 to 195 (HSSE…KNVE). DNA-binding regions (AP2/ERF) lie at residues 203-269 (IYRG…TNFP) and 305-363 (MYRG…TNFD). The tract at residues 387–406 (SPATAAADKTVDLSPSDSPS) is disordered.

It belongs to the AP2/ERF transcription factor family. AP2 subfamily. Expressed in roots, seedlings, inflorescence, and siliques. Also detected at low levels in leaves.

The protein resides in the nucleus. Functionally, probably acts as a transcriptional activator. Binds to the GCC-box pathogenesis-related promoter element. May be involved in the regulation of gene expression by stress factors and by components of stress signal transduction pathways. Involved in the regulation of floral organs size. The protein is AP2-like ethylene-responsive transcription factor AIL5 of Arabidopsis thaliana (Mouse-ear cress).